A 260-amino-acid polypeptide reads, in one-letter code: 3beta-hydroxysteroid dehydrogenase 2 (260 aa).

NAD(+) contacts are provided by residues Asp43, 69 to 70 (DV), Asn96, Tyr163, and Lys167. Tyr163 functions as the Proton acceptor in the catalytic mechanism.

Belongs to the short-chain dehydrogenases/reductases (SDR) family.

The catalysed reaction is 3-oxo-5beta-cholan-24-oate + NADH + H(+) = isolithocholate + NAD(+). The enzyme catalyses 12alpha-hydroxy-3-oxo-5beta-cholan-24-oate + NADH + H(+) = isodeoxycholate + NAD(+). It catalyses the reaction 12alpha-hydroxy-3-oxo-5beta-cholan-24-oate + NADPH + H(+) = isodeoxycholate + NADP(+). It carries out the reaction 7alpha,12alpha-dihydroxy-3-oxo-5beta-cholan-24-oate + NADH + H(+) = isocholate + NAD(+). The catalysed reaction is 3-oxochenodeoxycholate + NADH + H(+) = isochenodeoxycholate + NAD(+). Functionally, involved in the modification of secondary bile acids into iso-bile acids (3beta-bile acids) via epimerization of the 3-OH group through a 3-oxo-intermediate. Catalyzes the reduction of 12-alpha-hydroxy-3-oxo-5-beta-cholan-24-oate (3-oxo-DCA) and 3-oxo-5-beta-cholan-24-oate (3-oxo-LCA) to yield isodeoxycholate (isoDCA) and isolithocholate (isoLCA), respectively. Is also able to catalyze the reduction of 3-dehydrocholate (3-oxo-CA or 7alpha,12alpha-dihydroxy-3-oxo-5beta-cholan-24-oate) and 7-alpha-hydroxy-3-oxo-5-beta-cholan-24-oate (3-oxo-CDCA), into isocholate (isoCA) and isochenodeoxycholate (isoCDCA), respectively. Accepts both NADH and NADPH as cosubstrates. The conversion of the abundant bile acid deoxycholate (DCA) into isoDCA by the gut bacterium E.lenta favors the growth of the keystone commensal genus Bacteroides, since isoDCA is less cytotoxic than its parent compound, DCA; iso-bile acids have thus a potential role in modulating gut community composition. This Eggerthella lenta (strain ATCC 25559 / DSM 2243 / CCUG 17323 / JCM 9979 / KCTC 3265 / NCTC 11813 / VPI 0255 / 1899 B) (Eubacterium lentum) protein is 3beta-hydroxysteroid dehydrogenase 2.